The sequence spans 205 residues: MLEARDLYCERDERTLFRGLSFTVDAGEWVQVTGGNGAGKTTLLRLLTGLARPDGGEVYWQGEPLRRVRDSFHRSLLWIGHQPGIKTRLTARENLHFFHPGDGARLPEALAQAGLAGFEDVPVARLSAGQQRRVALARLWLTRAALWVLDEPFTAIDVNGVARLTRRMAAHTAQGGMVILTTHQPLPGAADTVRRLALTGGEAGL.

The region spanning 2–205 (LEARDLYCER…LALTGGEAGL (204 aa)) is the ABC transporter domain. ATP is bound at residue 34-41 (GGNGAGKT).

It belongs to the ABC transporter superfamily. CcmA exporter (TC 3.A.1.107) family. As to quaternary structure, the complex is composed of two ATP-binding proteins (CcmA) and two transmembrane proteins (CcmB).

The protein resides in the cell inner membrane. The enzyme catalyses heme b(in) + ATP + H2O = heme b(out) + ADP + phosphate + H(+). In terms of biological role, part of the ABC transporter complex CcmAB involved in the biogenesis of c-type cytochromes; once thought to export heme, this seems not to be the case, but its exact role is uncertain. Responsible for energy coupling to the transport system. The sequence is that of Cytochrome c biogenesis ATP-binding export protein CcmA 1 from Salmonella paratyphi A (strain ATCC 9150 / SARB42).